Here is a 134-residue protein sequence, read N- to C-terminus: uncharacterized protein (134 aa).

The signal sequence occupies residues 1–16 (MAKAVALLLAAIAASA).

This is an uncharacterized protein from Oryza sativa subsp. indica (Rice).